The chain runs to 35 residues: Photosystem II reaction center protein T (35 aa).

The helical transmembrane segment at 3–23 (ALVYTFLLVSTLGIIFFAIFF) threads the bilayer.

Belongs to the PsbT family. As to quaternary structure, PSII is composed of 1 copy each of membrane proteins PsbA, PsbB, PsbC, PsbD, PsbE, PsbF, PsbH, PsbI, PsbJ, PsbK, PsbL, PsbM, PsbT, PsbY, PsbZ, Psb30/Ycf12, at least 3 peripheral proteins of the oxygen-evolving complex and a large number of cofactors. It forms dimeric complexes.

It is found in the plastid. Its subcellular location is the chloroplast thylakoid membrane. In terms of biological role, found at the monomer-monomer interface of the photosystem II (PS II) dimer, plays a role in assembly and dimerization of PSII. PSII is a light-driven water plastoquinone oxidoreductase, using light energy to abstract electrons from H(2)O, generating a proton gradient subsequently used for ATP formation. In Citrus sinensis (Sweet orange), this protein is Photosystem II reaction center protein T.